Here is a 544-residue protein sequence, read N- to C-terminus: Involucrin (544 aa).

Residues 1–520 (MSQQHTLPVT…GQVQGIQQAL (520 aa)) form a disordered region. The span at 76–90 (EQQQQPQEQKLQQQH) shows a compositional bias: low complexity. Basic and acidic residues-rich tracts occupy residues 96–117 (EHQK…REKQ), 124–152 (EEEK…KEQL), 202–234 (QLKH…KQSE), 252–271 (QLKH…HQEG), 283–297 (KHLE…HPEQ), 304–347 (QLEE…HPEQ), 354–411 (QLEE…REEQ), 423–437 (KHLE…HPEQ), and 462–476 (KHLE…HPEQ). Over residues 477–494 (QEGQLKPQEQQEGQLKGL) the composition is skewed to low complexity.

It belongs to the involucrin family. Directly or indirectly cross-linked to cornifelin (CNFN). Post-translationally, substrate of transglutaminase. Specific glutamines or lysines are cross-linked to keratins, desmoplakin and to inter involucrin molecules. Keratinocytes of epidermis and other stratified squamous epithelia.

Its subcellular location is the cytoplasm. Its function is as follows. Part of the insoluble cornified cell envelope (CE) of stratified squamous epithelia. The chain is Involucrin (IVL) from Aotus trivirgatus (Three-striped night monkey).